The primary structure comprises 161 residues: Cytochrome b6-f complex subunit 4 (161 aa).

Transmembrane regions (helical) follow at residues 37–57 (LLYI…GLAV), 96–116 (LLGV…PFIE), and 132–152 (TVFL…TFPI).

Belongs to the cytochrome b family. PetD subfamily. The 4 large subunits of the cytochrome b6-f complex are cytochrome b6, subunit IV (17 kDa polypeptide, PetD), cytochrome f and the Rieske protein, while the 4 small subunits are PetG, PetL, PetM and PetN. The complex functions as a dimer.

The protein localises to the cellular thylakoid membrane. Component of the cytochrome b6-f complex, which mediates electron transfer between photosystem II (PSII) and photosystem I (PSI), cyclic electron flow around PSI, and state transitions. In Cyanothece sp. (strain PCC 7425 / ATCC 29141), this protein is Cytochrome b6-f complex subunit 4.